We begin with the raw amino-acid sequence, 373 residues long: Mannan endo-1,4-beta-mannosidase A (373 aa).

Positions 1-17 (MKGLFAFGLGLLSLVNA) are cleaved as a signal peptide. Substrate-binding positions include Trp81, Asn193, and 194 to 196 (EPR). Glu194 functions as the Proton donor/acceptor in the catalytic mechanism. Cysteines 197 and 200 form a disulfide. Glu230, Tyr267, and Trp271 together coordinate substrate. A disulfide bridge links Cys289 with Cys296. Glu300 serves as the catalytic Nucleophile. A disulfide bond links Cys308 and Cys359. Trp332 lines the substrate pocket.

It belongs to the glycosyl hydrolase 5 (cellulase A) family. As to quaternary structure, monomer. In terms of processing, not glycosylated.

It is found in the secreted. It catalyses the reaction Random hydrolysis of (1-&gt;4)-beta-D-mannosidic linkages in mannans, galactomannans and glucomannans.. Endo-1,4-mannanase that catalyzes the random hydrolysis of (1-&gt;4)-beta-D-mannosidic linkages in mannans and heteromannans. It is a crucial enzyme for depolymerization of seed galactomannans and wood galactoglucomannans. Hydrolyzes structurally different mannan polysaccharides, such as galactomannans, glucomannans, and beta-1,4-mannans from different sources, yielding principally mannobiose. Also has transglycosylation activity. In Podospora anserina (strain S / ATCC MYA-4624 / DSM 980 / FGSC 10383) (Pleurage anserina), this protein is Mannan endo-1,4-beta-mannosidase A.